The chain runs to 348 residues: GTPase Obg 1 (348 aa).

Positions 1–159 (MSFVDEAKIH…HCVLLKLKIV (159 aa)) constitute an Obg domain. The OBG-type G domain maps to 160–329 (SDVGIIGMPN…LHAQVKKAVV (170 aa)). GTP-binding positions include 166–173 (GMPNAGKS), 191–195 (FTTLE), 212–215 (DIPG), 279–282 (NKCD), and 310–312 (GDE). The Mg(2+) site is built by Ser173 and Thr193.

Belongs to the TRAFAC class OBG-HflX-like GTPase superfamily. OBG GTPase family. In terms of assembly, monomer. It depends on Mg(2+) as a cofactor.

The protein resides in the cytoplasm. Functionally, an essential GTPase which binds GTP, GDP and possibly (p)ppGpp with moderate affinity, with high nucleotide exchange rates and a fairly low GTP hydrolysis rate. Plays a role in control of the cell cycle, stress response, ribosome biogenesis and in those bacteria that undergo differentiation, in morphogenesis control. This is GTPase Obg 1 from Anaplasma marginale (strain Florida).